The primary structure comprises 793 residues: uncharacterized protein (793 aa).

A signal peptide spans 1 to 22 (MKFKYGAIFFSGFLGLSAILAA). A lipid anchor (N-palmitoyl cysteine) is attached at cysteine 23. Cysteine 23 carries S-diacylglycerol cysteine lipidation. Disordered regions lie at residues 181–200 (LNQK…TLTV), 212–264 (KIED…DDQV), and 444–504 (KAPS…SNNN). Over residues 212–227 (KIEDSAKANGKSDEKG) the composition is skewed to basic and acidic residues. The segment covering 237 to 246 (ATFSLVQLKQ) has biased composition (polar residues). Positions 247 to 264 (TQEKTDDSQDTKNSDDQV) are enriched in basic and acidic residues. The segment covering 449–468 (NGENGQTNEGNSTNGEQNLL) has biased composition (polar residues). The span at 472–485 (EVKDDSKPKEEVKS) shows a compositional bias: basic and acidic residues. Residues 491 to 504 (KESSQNQGKKSNNN) show a composition bias toward low complexity.

The protein belongs to the MG185/MG260 family.

It is found in the cell membrane. This is an uncharacterized protein from Mycoplasma pneumoniae (strain ATCC 29342 / M129 / Subtype 1) (Mycoplasmoides pneumoniae).